The primary structure comprises 122 residues: Protein TCL1B3 (122 aa).

It belongs to the TCL1 family.

The chain is Protein TCL1B3 (Tcl1b3) from Mus musculus (Mouse).